We begin with the raw amino-acid sequence, 267 residues long: MALPDFSMRQLLEAGVHFGHQTHRWNPKMTPYIFGERNNIHIIDLSQTVPLLHQALKVVSDTVGRGGRLLFVGTKRQASDIVADAARRSAQYYVNSRWLGGMLTNWKTISNSIQRLRRLDEMLSSENLGLTKKERLNLERERDKLERALGGIRDMGSTPDMMFVIDTNKEAIAVQEARRLGIPVIAVIDSNCDPDVVDYPIPGNDDAARAIALYCDLIAKAAIDGIERQQGSLGVDIGESAAAPSEPALETASAEATAEGEQPGSQA.

Positions 237–267 (IGESAAAPSEPALETASAEATAEGEQPGSQA) are disordered. The span at 238-261 (GESAAAPSEPALETASAEATAEGE) shows a compositional bias: low complexity.

Belongs to the universal ribosomal protein uS2 family.

In Chelativorans sp. (strain BNC1), this protein is Small ribosomal subunit protein uS2.